Reading from the N-terminus, the 494-residue chain is Glutamyl-tRNA(Gln) amidotransferase subunit A (494 aa).

Residues lysine 79 and serine 159 each act as charge relay system in the active site. The active-site Acyl-ester intermediate is serine 183.

Belongs to the amidase family. GatA subfamily. Heterotrimer of A, B and C subunits.

It catalyses the reaction L-glutamyl-tRNA(Gln) + L-glutamine + ATP + H2O = L-glutaminyl-tRNA(Gln) + L-glutamate + ADP + phosphate + H(+). Functionally, allows the formation of correctly charged Gln-tRNA(Gln) through the transamidation of misacylated Glu-tRNA(Gln) in organisms which lack glutaminyl-tRNA synthetase. The reaction takes place in the presence of glutamine and ATP through an activated gamma-phospho-Glu-tRNA(Gln). The sequence is that of Glutamyl-tRNA(Gln) amidotransferase subunit A from Bartonella tribocorum (strain CIP 105476 / IBS 506).